The primary structure comprises 119 residues: NADH-quinone oxidoreductase subunit A (119 aa).

A run of 3 helical transmembrane segments spans residues F7–G27, L63–V83, and I88–V108.

This sequence belongs to the complex I subunit 3 family. NDH-1 is composed of 14 different subunits. Subunits NuoA, H, J, K, L, M, N constitute the membrane sector of the complex.

The protein resides in the cell inner membrane. It catalyses the reaction a quinone + NADH + 5 H(+)(in) = a quinol + NAD(+) + 4 H(+)(out). In terms of biological role, NDH-1 shuttles electrons from NADH, via FMN and iron-sulfur (Fe-S) centers, to quinones in the respiratory chain. The immediate electron acceptor for the enzyme in this species is believed to be ubiquinone. Couples the redox reaction to proton translocation (for every two electrons transferred, four hydrogen ions are translocated across the cytoplasmic membrane), and thus conserves the redox energy in a proton gradient. The chain is NADH-quinone oxidoreductase subunit A from Polynucleobacter necessarius subsp. necessarius (strain STIR1).